Here is a 100-residue protein sequence, read N- to C-terminus: Urease subunit gamma (100 aa).

It belongs to the urease gamma subunit family. As to quaternary structure, heterotrimer of UreA (gamma), UreB (beta) and UreC (alpha) subunits. Three heterotrimers associate to form the active enzyme.

The protein resides in the cytoplasm. It carries out the reaction urea + 2 H2O + H(+) = hydrogencarbonate + 2 NH4(+). It functions in the pathway nitrogen metabolism; urea degradation; CO(2) and NH(3) from urea (urease route): step 1/1. The sequence is that of Urease subunit gamma from Bordetella bronchiseptica (strain ATCC BAA-588 / NCTC 13252 / RB50) (Alcaligenes bronchisepticus).